Reading from the N-terminus, the 185-residue chain is Tumor necrosis factor receptor superfamily member 17 (185 aa).

The Extracellular portion of the chain corresponds to 1–49 (MAQQCFHSEYFDSLLHACKPCHLRCSNPPATCQPYCDPSVTSSVKGTYT). Residues 4–36 (QCFHSEYFDSLLHACKPCHLRCSNPPATCQPYC) form a TNFR-Cys repeat. 3 cysteine pairs are disulfide-bonded: Cys5-Cys18, Cys21-Cys32, and Cys25-Cys36. Residues 50–70 (VLWIFLGLTLVLSLALFTISF) traverse the membrane as a helical; Signal-anchor for type III membrane protein segment. Topologically, residues 71-185 (LLRKMNPEAL…MGMEKPTHTR (115 aa)) are cytoplasmic.

Associates with TRAF1, TRAF2, TRAF3, TRAF5 and TRAF6. In terms of tissue distribution, detected in spleen, thymus, bone marrow and heart, and at lower levels in kidney and lung.

Its subcellular location is the membrane. Functionally, receptor for TNFSF13B/BLyS/BAFF and TNFSF13/APRIL. Promotes B-cell survival and plays a role in the regulation of humoral immunity. Activates NF-kappa-B and JNK. In Mus musculus (Mouse), this protein is Tumor necrosis factor receptor superfamily member 17 (Tnfrsf17).